The sequence spans 176 residues: Xanthine-guanine phosphoribosyltransferase (176 aa).

5-phospho-alpha-D-ribose 1-diphosphate is bound by residues 51-52, Arg88, and 111-119; these read RG and DDLVDSGKT. Arg88 serves as a coordination point for GMP. Residue Asp112 participates in Mg(2+) binding. The guanine site is built by Asp115 and Ile158. Residues Asp115 and Ile158 each coordinate xanthine. GMP is bound by residues 115 to 119 and 157 to 158; these read DSGKT and WI.

This sequence belongs to the purine/pyrimidine phosphoribosyltransferase family. XGPT subfamily. Homotetramer. Mg(2+) serves as cofactor.

The protein localises to the cell inner membrane. The enzyme catalyses GMP + diphosphate = guanine + 5-phospho-alpha-D-ribose 1-diphosphate. It catalyses the reaction XMP + diphosphate = xanthine + 5-phospho-alpha-D-ribose 1-diphosphate. The catalysed reaction is IMP + diphosphate = hypoxanthine + 5-phospho-alpha-D-ribose 1-diphosphate. The protein operates within purine metabolism; GMP biosynthesis via salvage pathway; GMP from guanine: step 1/1. Its pathway is purine metabolism; XMP biosynthesis via salvage pathway; XMP from xanthine: step 1/1. Purine salvage pathway enzyme that catalyzes the transfer of the ribosyl-5-phosphate group from 5-phospho-alpha-D-ribose 1-diphosphate (PRPP) to the N9 position of the 6-oxopurines guanine and xanthine to form the corresponding ribonucleotides GMP (guanosine 5'-monophosphate) and XMP (xanthosine 5'-monophosphate), with the release of PPi. To a lesser extent, also acts on hypoxanthine. This is Xanthine-guanine phosphoribosyltransferase from Ruegeria sp. (strain TM1040) (Silicibacter sp.).